Reading from the N-terminus, the 476-residue chain is Cysteine--tRNA ligase (476 aa).

C36 is a Zn(2+) binding site. Positions 38–48 match the 'HIGH' region motif; sequence PTVYDYAHIGN. Residues C221, H246, and E250 each coordinate Zn(2+). The 'KMSKS' region signature appears at 278–282; it reads KMSKS. K281 is an ATP binding site.

The protein belongs to the class-I aminoacyl-tRNA synthetase family. As to quaternary structure, monomer. Zn(2+) is required as a cofactor.

It localises to the cytoplasm. It carries out the reaction tRNA(Cys) + L-cysteine + ATP = L-cysteinyl-tRNA(Cys) + AMP + diphosphate. The protein is Cysteine--tRNA ligase of Chlamydia felis (strain Fe/C-56) (Chlamydophila felis).